A 296-amino-acid polypeptide reads, in one-letter code: Putative F-box protein At1g67623 (296 aa).

The region spanning 21-70 (SLCLDSLPEDLLVEISSCTGASSLSAVRNLRLVSKSFRRICDEKYVFYRL) is the F-box domain.

This chain is Putative F-box protein At1g67623, found in Arabidopsis thaliana (Mouse-ear cress).